A 108-amino-acid polypeptide reads, in one-letter code: Urease subunit beta (108 aa).

It belongs to the urease beta subunit family. Probable heterotrimer of UreA (gamma), UreB (beta) and UreC (alpha) subunits. Three heterotrimers associate to form the active enzyme. The trimeric urease interacts with an accessory complex composed of UreD, UreF and UreG, which is required for the assembly of the nickel containing metallocenter of UreC. The UreE protein may also play a direct role in nickel transfer to the urease apoprotein.

It localises to the cytoplasm. The enzyme catalyses urea + 2 H2O + H(+) = hydrogencarbonate + 2 NH4(+). Its pathway is nitrogen metabolism; urea degradation; CO(2) and NH(3) from urea (urease route): step 1/1. The chain is Urease subunit beta from Proteus mirabilis (strain HI4320).